A 129-amino-acid chain; its full sequence is NADPH-dependent 7-cyano-7-deazaguanine reductase (129 aa).

C34 (thioimide intermediate) is an active-site residue. D41 serves as the catalytic Proton donor. Residues V56–L58 and H75–E76 each bind substrate.

It belongs to the GTP cyclohydrolase I family. QueF type 1 subfamily.

It is found in the cytoplasm. It carries out the reaction 7-aminomethyl-7-carbaguanine + 2 NADP(+) = 7-cyano-7-deazaguanine + 2 NADPH + 3 H(+). It participates in tRNA modification; tRNA-queuosine biosynthesis. Functionally, catalyzes the NADPH-dependent reduction of 7-cyano-7-deazaguanine (preQ0) to 7-aminomethyl-7-deazaguanine (preQ1). This Thioalkalivibrio sulfidiphilus (strain HL-EbGR7) protein is NADPH-dependent 7-cyano-7-deazaguanine reductase.